The primary structure comprises 358 residues: Gibberellin 2-beta-dioxygenase 6 (358 aa).

The Fe2OG dioxygenase domain maps to 207 to 308 (DETTCFLRLN…RLSVAYFLCP (102 aa)). Tyr-218 is a 2-oxoglutarate binding site. Residues His-233, Asp-235, and His-289 each contribute to the Fe cation site. Residues Arg-299 and Ser-301 each coordinate 2-oxoglutarate.

This sequence belongs to the iron/ascorbate-dependent oxidoreductase family. GA2OX subfamily. L-ascorbate serves as cofactor. Fe(2+) is required as a cofactor. As to expression, expressed in panicles. Expressed at low levels in young shoots, leaf blades and elongating internodes.

It is found in the cytoplasm. Its subcellular location is the nucleus. The enzyme catalyses gibberellin A1 + 2-oxoglutarate + O2 = gibberellin A8 + succinate + CO2. Functionally, catalyzes the 2-beta-hydroxylation of several biologically active gibberellins, leading to the homeostatic regulation of their endogenous level. Catabolism of gibberellins (GAs) plays a central role in plant development. In vitro, converts GA12 and GA53 to the corresponding 2-beta-hydroxylated products GA110 and GA97, respectively. The chain is Gibberellin 2-beta-dioxygenase 6 from Oryza sativa subsp. japonica (Rice).